The sequence spans 452 residues: UDP-N-acetylmuramoylalanine--D-glutamate ligase (452 aa).

119-125 contacts ATP; sequence GSNGKTT.

This sequence belongs to the MurCDEF family.

Its subcellular location is the cytoplasm. It carries out the reaction UDP-N-acetyl-alpha-D-muramoyl-L-alanine + D-glutamate + ATP = UDP-N-acetyl-alpha-D-muramoyl-L-alanyl-D-glutamate + ADP + phosphate + H(+). It participates in cell wall biogenesis; peptidoglycan biosynthesis. Functionally, cell wall formation. Catalyzes the addition of glutamate to the nucleotide precursor UDP-N-acetylmuramoyl-L-alanine (UMA). The protein is UDP-N-acetylmuramoylalanine--D-glutamate ligase of Streptococcus pyogenes serotype M4 (strain MGAS10750).